The following is a 163-amino-acid chain: NADH-quinone oxidoreductase subunit I (163 aa).

4Fe-4S ferredoxin-type domains follow at residues 54-84 and 94-123; these read LRRY…IDSH and TRYD…LTRL. C64, C67, C70, C74, C103, C106, C109, and C113 together coordinate [4Fe-4S] cluster.

This sequence belongs to the complex I 23 kDa subunit family. In terms of assembly, NDH-1 is composed of 14 different subunits. Subunits NuoA, H, J, K, L, M, N constitute the membrane sector of the complex. The cofactor is [4Fe-4S] cluster.

It is found in the cell inner membrane. It catalyses the reaction a quinone + NADH + 5 H(+)(in) = a quinol + NAD(+) + 4 H(+)(out). Functionally, NDH-1 shuttles electrons from NADH, via FMN and iron-sulfur (Fe-S) centers, to quinones in the respiratory chain. The immediate electron acceptor for the enzyme in this species is believed to be ubiquinone. Couples the redox reaction to proton translocation (for every two electrons transferred, four hydrogen ions are translocated across the cytoplasmic membrane), and thus conserves the redox energy in a proton gradient. This chain is NADH-quinone oxidoreductase subunit I, found in Halorhodospira halophila (strain DSM 244 / SL1) (Ectothiorhodospira halophila (strain DSM 244 / SL1)).